The following is a 70-amino-acid chain: ATP synthase subunit c (70 aa).

The next 2 membrane-spanning stretches (helical) occupy residues 3–23 (FIAA…GNGM) and 47–67 (FIGV…AFML).

The protein belongs to the ATPase C chain family. As to quaternary structure, F-type ATPases have 2 components, F(1) - the catalytic core - and F(0) - the membrane proton channel. F(1) has five subunits: alpha(3), beta(3), gamma(1), delta(1), epsilon(1). F(0) has three main subunits: a(1), b(2) and c(10-14). The alpha and beta chains form an alternating ring which encloses part of the gamma chain. F(1) is attached to F(0) by a central stalk formed by the gamma and epsilon chains, while a peripheral stalk is formed by the delta and b chains.

It localises to the cell membrane. In terms of biological role, f(1)F(0) ATP synthase produces ATP from ADP in the presence of a proton or sodium gradient. F-type ATPases consist of two structural domains, F(1) containing the extramembraneous catalytic core and F(0) containing the membrane proton channel, linked together by a central stalk and a peripheral stalk. During catalysis, ATP synthesis in the catalytic domain of F(1) is coupled via a rotary mechanism of the central stalk subunits to proton translocation. Its function is as follows. Key component of the F(0) channel; it plays a direct role in translocation across the membrane. A homomeric c-ring of between 10-14 subunits forms the central stalk rotor element with the F(1) delta and epsilon subunits. This chain is ATP synthase subunit c, found in Lacticaseibacillus casei (strain BL23) (Lactobacillus casei).